A 432-amino-acid polypeptide reads, in one-letter code: Gamma-glutamyl phosphate reductase (432 aa).

The protein belongs to the gamma-glutamyl phosphate reductase family.

The protein resides in the cytoplasm. It carries out the reaction L-glutamate 5-semialdehyde + phosphate + NADP(+) = L-glutamyl 5-phosphate + NADPH + H(+). The protein operates within amino-acid biosynthesis; L-proline biosynthesis; L-glutamate 5-semialdehyde from L-glutamate: step 2/2. Its function is as follows. Catalyzes the NADPH-dependent reduction of L-glutamate 5-phosphate into L-glutamate 5-semialdehyde and phosphate. The product spontaneously undergoes cyclization to form 1-pyrroline-5-carboxylate. The polypeptide is Gamma-glutamyl phosphate reductase (Methylorubrum extorquens (strain CM4 / NCIMB 13688) (Methylobacterium extorquens)).